Here is a 406-residue protein sequence, read N- to C-terminus: Cysteine desulfurase (406 aa).

At lysine 226 the chain carries N6-(pyridoxal phosphate)lysine. The active-site Cysteine persulfide intermediate is cysteine 364.

The protein belongs to the class-V pyridoxal-phosphate-dependent aminotransferase family. Csd subfamily. In terms of assembly, homodimer. Interacts with SufE and the SufBCD complex composed of SufB, SufC and SufD. The interaction with SufE is required to mediate the direct transfer of the sulfur atom from the S-sulfanylcysteine. The cofactor is pyridoxal 5'-phosphate.

It localises to the cytoplasm. It carries out the reaction (sulfur carrier)-H + L-cysteine = (sulfur carrier)-SH + L-alanine. The catalysed reaction is L-selenocysteine + AH2 = hydrogenselenide + L-alanine + A + H(+). It participates in cofactor biosynthesis; iron-sulfur cluster biosynthesis. Its function is as follows. Cysteine desulfurases mobilize the sulfur from L-cysteine to yield L-alanine, an essential step in sulfur metabolism for biosynthesis of a variety of sulfur-containing biomolecules. Component of the suf operon, which is activated and required under specific conditions such as oxidative stress and iron limitation. Acts as a potent selenocysteine lyase in vitro, that mobilizes selenium from L-selenocysteine. Selenocysteine lyase activity is however unsure in vivo. The chain is Cysteine desulfurase from Escherichia coli O8 (strain IAI1).